Consider the following 181-residue polypeptide: uncharacterized protein (181 aa).

The first 23 residues, 1 to 23 (MKKCLLFLTTIALILSLSTNAFA), serve as a signal peptide directing secretion.

This is an uncharacterized protein from Bacillus subtilis (strain 168).